The sequence spans 420 residues: Proteinase-activated receptor 1 (420 aa).

The signal sequence occupies residues 1–20; that stretch reads MMELRVLLLLLLLTLLGAMG. Positions 21-42 are cleaved as a propeptide — removed for receptor activation; it reads SLCLANSDTQAKGAHSNNMTIK. The N-linked (GlcNAc...) asparagine glycan is linked to Asn-38. Residues 43–101 lie on the Extracellular side of the membrane; sequence TFRIFDDSESEFEEIPWDELDESGEGSGDQAPVSRSARKPIRRNITKEAEQYLSSQWLT. Residues 61-80 form a disordered region; sequence ELDESGEGSGDQAPVSRSAR. N-linked (GlcNAc...) asparagine glycosylation is present at Asn-86. Residues 102–127 form a helical membrane-spanning segment; that stretch reads KFVPSLYTVVFIVGLPLNLLAIIIFL. At 128-136 the chain is on the cytoplasmic side; it reads FKMKVRKPA. The chain crosses the membrane as a helical span at residues 137–156; that stretch reads VVYMLNLAIADVFFVSVLPF. Over 157–175 the chain is Extracellular; sequence KIAYHLSGNDWLFGPGMCR. An intrachain disulfide couples Cys-174 to Cys-253. Residues 176–197 form a helical membrane-spanning segment; it reads IVTAIFYCNMYCSVLLIASISV. The Cytoplasmic portion of the chain corresponds to 198–217; sequence DRFLAVVYPMHSLSWRTMSR. A helical transmembrane segment spans residues 218 to 238; sequence AYMACSFIWLISIASTIPLLV. Residues 239-267 lie on the Extracellular side of the membrane; it reads TEQTQKIPRLDITTCHDVLDLKDLKDFYI. The chain crosses the membrane as a helical span at residues 268–287; that stretch reads YYFSSFCLLFFFVPFIITTI. The Cytoplasmic segment spans residues 288 to 310; sequence CYIGIIRSLSSSSIENSCKKTRA. A helical membrane pass occupies residues 311–333; sequence LFLAVVVLCVFIICFGPTNVLFL. Topologically, residues 334 to 345 are extracellular; the sequence is THYLQEANEFLY. Residues 346 to 369 traverse the membrane as a helical segment; that stretch reads FAYILSACVGSVSCCLDPLIYYYA. Over 370–420 the chain is Cytoplasmic; the sequence is SSQCQRYLYSLLCCRKVSEPGSSTGQLMSTAMKNDNCSTNAKSSIYKKLLA.

The protein belongs to the G-protein coupled receptor 1 family. In terms of processing, proteolytic cleavage generates a new N-terminus that functions as a tethered ligand.

It is found in the cell membrane. In terms of biological role, high affinity receptor that binds the activated thrombin, leading to calcium release from intracellular stores. The thrombin-activated receptor signaling pathway is mediated through PTX-insensitive G proteins, activation of phospholipase C resulting in the production of 1D-myo-inositol 1,4,5-trisphosphate (InsP3) which binds to InsP3 receptors causing calcium release from the stores. In Xenopus laevis (African clawed frog), this protein is Proteinase-activated receptor 1.